The sequence spans 158 residues: Transcription elongation factor GreA (158 aa).

Belongs to the GreA/GreB family.

Its function is as follows. Necessary for efficient RNA polymerase transcription elongation past template-encoded arresting sites. The arresting sites in DNA have the property of trapping a certain fraction of elongating RNA polymerases that pass through, resulting in locked ternary complexes. Cleavage of the nascent transcript by cleavage factors such as GreA or GreB allows the resumption of elongation from the new 3'terminus. GreA releases sequences of 2 to 3 nucleotides. The sequence is that of Transcription elongation factor GreA from Ralstonia nicotianae (strain ATCC BAA-1114 / GMI1000) (Ralstonia solanacearum).